Reading from the N-terminus, the 112-residue chain is CRISPR-associated endoribonuclease Cas2 2 (112 aa).

Asp15 contacts Mg(2+).

This sequence belongs to the CRISPR-associated endoribonuclease Cas2 protein family. In terms of assembly, homodimer, forms a heterotetramer with a Cas1 homodimer. Mg(2+) serves as cofactor.

Functionally, CRISPR (clustered regularly interspaced short palindromic repeat), is an adaptive immune system that provides protection against mobile genetic elements (viruses, transposable elements and conjugative plasmids). CRISPR clusters contain sequences complementary to antecedent mobile elements and target invading nucleic acids. CRISPR clusters are transcribed and processed into CRISPR RNA (crRNA). Functions as a ssRNA-specific endoribonuclease. Involved in the integration of spacer DNA into the CRISPR cassette. The chain is CRISPR-associated endoribonuclease Cas2 2 from Rhodospirillum rubrum (strain ATCC 11170 / ATH 1.1.1 / DSM 467 / LMG 4362 / NCIMB 8255 / S1).